Consider the following 127-residue polypeptide: Fluoride-specific ion channel FluC 1 (127 aa).

4 consecutive transmembrane segments (helical) span residues 4–24, 35–55, 71–91, and 101–121; these read TLLAVFIGGGVGSMARWLVSL, VGTLIVNLVGAFIIGLTLALF, TGFCGGLTTFSTFSVEVVYLI, and GTILLNVAGSLAMTMLAFILV. Residues Gly-75 and Thr-78 each contribute to the Na(+) site.

This sequence belongs to the fluoride channel Fluc/FEX (TC 1.A.43) family.

It localises to the cell inner membrane. The enzyme catalyses fluoride(in) = fluoride(out). Its activity is regulated as follows. Na(+) is not transported, but it plays an essential structural role and its presence is essential for fluoride channel function. Functionally, fluoride-specific ion channel. Important for reducing fluoride concentration in the cell, thus reducing its toxicity. The protein is Fluoride-specific ion channel FluC 1 of Yersinia pseudotuberculosis serotype I (strain IP32953).